Here is a 512-residue protein sequence, read N- to C-terminus: Glutathione-binding protein GsiB (512 aa).

A signal peptide spans 1–26 (MARAVHRSGLVALGIVTALMASCAFA).

It belongs to the bacterial solute-binding protein 5 family. In terms of assembly, the complex is composed of two ATP-binding proteins (GsiA), two transmembrane proteins (GsiC and GsiD) and a solute-binding protein (GsiB).

The protein localises to the periplasm. Its function is as follows. Part of the ABC transporter complex GsiABCD involved in glutathione import. Binds glutathione. This chain is Glutathione-binding protein GsiB, found in Shigella dysenteriae serotype 1 (strain Sd197).